Here is a 435-residue protein sequence, read N- to C-terminus: Trigger factor (435 aa).

Positions 164 to 249 (GDFAKFDFEG…LHEIQGKKAG (86 aa)) constitute a PPIase FKBP-type domain.

It belongs to the FKBP-type PPIase family. Tig subfamily.

The protein resides in the cytoplasm. The enzyme catalyses [protein]-peptidylproline (omega=180) = [protein]-peptidylproline (omega=0). Involved in protein export. Acts as a chaperone by maintaining the newly synthesized protein in an open conformation. Functions as a peptidyl-prolyl cis-trans isomerase. In Campylobacter fetus subsp. fetus (strain 82-40), this protein is Trigger factor.